The primary structure comprises 614 residues: MAKKNIKQKKDNRIAIDVKKHIKKVDVGVFDGTFVFTSPLSISELAPKLNKSPNEIIMRYFKKGVVYNLNTILDEEQIGELCLEYDLDFKIEKNVNTENLLENIYFDDLEIDLVARAPIVTIMGHVDHGKTTLLDTIRKSSITASEAGGITQHIGAYQIIKDNRAITFIDTPGHEAFTEMRARGANLTDIVILVVAADDGIKMQTEEAIDHAKAANVPIIVFVNKMDKYEANPEKVLNQLSAKEIVAEELGGDVVFVKGSALKNEGISELLDSILLIAELNNYKANPNRLAYGTTIEANLDKGHGPLATLLVQNGTLRKGDYLVVGSTYGKIRNMFDEYDNEIEIALPSKPVKVSGFEEVPTAGDKFLALADEKQARAIANDVKQKKMRLERAMLQSSDIRTKIANGELKNINLIIKADVQGSLEALKGIFSSINIEGVTTTLIRSAIGTISESDVRLAQTSDAIIIGFNVRASRIIKDLADSVGVQIMNYDIIYKFKEDLELWMKGTLDPIIIEEVIGEAKVLKLFKHSQVGTICGCRVINGKIKRNALVRVLRDGIVIYNSKIATLQHNKDSVNEVIADKECGLTIANFNDIKENDIIEVYIKVEKKHDEVK.

Positions 115-283 constitute a tr-type G domain; sequence ARAPIVTIMG…ILLIAELNNY (169 aa). The G1 stretch occupies residues 124-131; that stretch reads GHVDHGKT. 124-131 lines the GTP pocket; sequence GHVDHGKT. Positions 149–153 are G2; that stretch reads GITQH. The interval 170–173 is G3; sequence DTPG. GTP is bound by residues 170–174 and 224–227; these read DTPGH and NKMD. The G4 stretch occupies residues 224 to 227; the sequence is NKMD. A G5 region spans residues 260-262; sequence SAL.

This sequence belongs to the TRAFAC class translation factor GTPase superfamily. Classic translation factor GTPase family. IF-2 subfamily.

It localises to the cytoplasm. One of the essential components for the initiation of protein synthesis. Protects formylmethionyl-tRNA from spontaneous hydrolysis and promotes its binding to the 30S ribosomal subunits. Also involved in the hydrolysis of GTP during the formation of the 70S ribosomal complex. In Ureaplasma parvum serovar 3 (strain ATCC 27815 / 27 / NCTC 11736), this protein is Translation initiation factor IF-2.